Reading from the N-terminus, the 316-residue chain is N-acetylmuramic acid 6-phosphate etherase (316 aa).

An SIS domain is found at 68–231 (ITDRLRSGGR…STCAMVRLGK (164 aa)). The active-site Proton donor is glutamate 96. The active site involves glutamate 127.

The protein belongs to the GCKR-like family. MurNAc-6-P etherase subfamily. Homodimer.

It carries out the reaction N-acetyl-D-muramate 6-phosphate + H2O = N-acetyl-D-glucosamine 6-phosphate + (R)-lactate. It participates in amino-sugar metabolism; N-acetylmuramate degradation. Specifically catalyzes the cleavage of the D-lactyl ether substituent of MurNAc 6-phosphate, producing GlcNAc 6-phosphate and D-lactate. This is N-acetylmuramic acid 6-phosphate etherase from Prochlorococcus marinus (strain MIT 9313).